A 406-amino-acid polypeptide reads, in one-letter code: MKKVHERFLEYVKVDTKSDETTRVTPSTKGQLELGKILAEELKEIGVDEVRISDKGYVYACLKSNCDKDIPKIGFISHMDTAPDMSGKNVNPKIVENYDGKDIELGNGYTLSPSFSPELPMYKGQTLITTDGTTLLGADDKAGVAEIVTAIEYLINNPEIKHGDIKIGFTPDEEIGEGADHFDVEGFGADFAYTLDGGRIGELEYENFNAASAKVEIIGKNVHPGSAKGKMINSILVAHEFVSMLPLDEVPEKTEGYEGFSFLLDIQGEVEKTSLSFIIRDFDKEGFKNRKERFNEIAKELNKKYGEGTVTVTLKDQYMNMKEMIEPRMHIVETAEKAMKQCGIEPIKNPIRGGTDGARLSFMGLPTPNLFTGGENFHGRYEYISINSMEKAVEVILNIIKIYAEK.

Residue His-78 coordinates Zn(2+). Asp-80 is an active-site residue. Asp-139 is a Zn(2+) binding site. The active-site Proton acceptor is Glu-173. Residues Glu-174, Asp-196, and His-378 each contribute to the Zn(2+) site.

The protein belongs to the peptidase M20B family. The cofactor is Zn(2+).

The protein localises to the cytoplasm. The catalysed reaction is Release of the N-terminal residue from a tripeptide.. Cleaves the N-terminal amino acid of tripeptides. The protein is Peptidase T of Clostridium perfringens (strain ATCC 13124 / DSM 756 / JCM 1290 / NCIMB 6125 / NCTC 8237 / Type A).